Consider the following 474-residue polypeptide: Cysteine--tRNA ligase (474 aa).

Zn(2+) is bound at residue C29. The short motif at 31–41 (ATVQGEPHVGH) is the 'HIGH' region element. Zn(2+)-binding residues include C211, H236, and E240. Residues 267-271 (KMSKS) carry the 'KMSKS' region motif. An ATP-binding site is contributed by K270.

Belongs to the class-I aminoacyl-tRNA synthetase family. As to quaternary structure, monomer. It depends on Zn(2+) as a cofactor.

It localises to the cytoplasm. The catalysed reaction is tRNA(Cys) + L-cysteine + ATP = L-cysteinyl-tRNA(Cys) + AMP + diphosphate. This chain is Cysteine--tRNA ligase, found in Beutenbergia cavernae (strain ATCC BAA-8 / DSM 12333 / CCUG 43141 / JCM 11478 / NBRC 16432 / NCIMB 13614 / HKI 0122).